The following is a 113-amino-acid chain: UPF0122 protein MCAP_0480 (113 aa).

This sequence belongs to the UPF0122 family.

Functionally, might take part in the signal recognition particle (SRP) pathway. This is inferred from the conservation of its genetic proximity to ftsY/ffh. May be a regulatory protein. The chain is UPF0122 protein MCAP_0480 from Mycoplasma capricolum subsp. capricolum (strain California kid / ATCC 27343 / NCTC 10154).